Here is a 174-residue protein sequence, read N- to C-terminus: Small heat shock protein OV25-1 (174 aa).

The sHSP domain occupies 50 to 161 (LNECNIGNTL…ASRNIPIRAS (112 aa)). The tract at residues 153–174 (SRNIPIRASPKEPEAKQKTKKQ) is disordered. The segment covering 161–174 (SPKEPEAKQKTKKQ) has biased composition (basic and acidic residues).

Belongs to the small heat shock protein (HSP20) family.

The polypeptide is Small heat shock protein OV25-1 (OV25-1) (Onchocerca volvulus).